Reading from the N-terminus, the 302-residue chain is Oxygen-dependent coproporphyrinogen-III oxidase (302 aa).

Serine 94 provides a ligand contact to substrate. A divalent metal cation-binding residues include histidine 98 and histidine 108. The active-site Proton donor is histidine 108. Residue asparagine 110–arginine 112 participates in substrate binding. A divalent metal cation is bound by residues histidine 147 and histidine 177. Positions tyrosine 242–glutamate 277 are important for dimerization. Glycine 260–arginine 262 is a substrate binding site.

It belongs to the aerobic coproporphyrinogen-III oxidase family. Homodimer. It depends on a divalent metal cation as a cofactor.

Its subcellular location is the cytoplasm. It carries out the reaction coproporphyrinogen III + O2 + 2 H(+) = protoporphyrinogen IX + 2 CO2 + 2 H2O. It functions in the pathway porphyrin-containing compound metabolism; protoporphyrin-IX biosynthesis; protoporphyrinogen-IX from coproporphyrinogen-III (O2 route): step 1/1. Functionally, involved in the heme biosynthesis. Catalyzes the aerobic oxidative decarboxylation of propionate groups of rings A and B of coproporphyrinogen-III to yield the vinyl groups in protoporphyrinogen-IX. This chain is Oxygen-dependent coproporphyrinogen-III oxidase, found in Erwinia tasmaniensis (strain DSM 17950 / CFBP 7177 / CIP 109463 / NCPPB 4357 / Et1/99).